The following is a 549-amino-acid chain: Cation/acetate symporter ActP (549 aa).

13 consecutive transmembrane segments (helical) span residues 33-53 (WQAIIMFLIFVVFTLGITYWA), 77-97 (LAIAGDYMSAASFLGISALVF), 103-123 (GLIYSLGFLVGWPIILFLIAE), 148-168 (ILSACGSLVVVALYLIAQMVG), 183-203 (IAVVLVGVLMMMYVLFGGMLA), 206-226 (WVQIIKAVLLLFGASFMAFMV), 262-282 (ISALSLGLGLMFGTAGLPHIL), 303-323 (GFMGYFYILTFIIGFGAIMLV), 355-375 (LFLGFISAVAFATILAVVAGL), 404-424 (VSKITVLVLGVIAIILGVLFE), 428-448 (IAFMVGLAFAIAASCNFPIIL), 464-484 (GGWLGLLTAVVLMILGPTIWV), and 493-513 (IFPYEYPALFSISVAFLGIWF).

This sequence belongs to the sodium:solute symporter (SSF) (TC 2.A.21) family.

The protein localises to the cell inner membrane. In terms of biological role, transports acetate. The sequence is that of Cation/acetate symporter ActP from Salmonella agona (strain SL483).